Here is a 192-residue protein sequence, read N- to C-terminus: Ion-translocating oxidoreductase complex subunit B (192 aa).

Residues 1 to 26 (MEMIVIAVVALTLLALLFGMLLGYAS) form a hydrophobic region. In terms of domain architecture, 4Fe-4S spans 32-91 (EEDPVVDQVDELLPQSQCGQCGYPGCRPYAEAVANNGEQINRCVPGGEPVMQKIATLLNV). The [4Fe-4S] cluster site is built by Cys49, Cys52, Cys57, Cys74, Cys117, Cys120, Cys123, Cys127, Cys147, Cys150, Cys153, and Cys157. 4Fe-4S ferredoxin-type domains follow at residues 108–137 (MLAV…GATR) and 138–167 (AMHT…LRPA).

Belongs to the 4Fe4S bacterial-type ferredoxin family. RnfB subfamily. The complex is composed of six subunits: RnfA, RnfB, RnfC, RnfD, RnfE and RnfG. Requires [4Fe-4S] cluster as cofactor.

It localises to the cell inner membrane. Functionally, part of a membrane-bound complex that couples electron transfer with translocation of ions across the membrane. This Cronobacter sakazakii (strain ATCC BAA-894) (Enterobacter sakazakii) protein is Ion-translocating oxidoreductase complex subunit B.